Consider the following 126-residue polypeptide: Fatty acid-binding protein 1, liver (126 aa).

The protein belongs to the calycin superfamily. Fatty-acid binding protein (FABP) family.

The protein localises to the cytoplasm. Binds free fatty acids and their coenzyme A derivatives, bilirubin, and some other small molecules in the cytoplasm. May be involved in intracellular lipid transport. The specificity of axolotl L-FABP differs from that of LB-FABP. This chain is Fatty acid-binding protein 1, liver, found in Ambystoma mexicanum (Axolotl).